Reading from the N-terminus, the 402-residue chain is Enoyl-[acyl-carrier-protein] reductase [NADH] (402 aa).

Residues 48–53, 74–75, 111–112, and 140–141 contribute to the NAD(+) site; these read GASSGY, FE, DA, and LA. Y226 contacts substrate. Y236 functions as the Proton donor in the catalytic mechanism. Residues K245 and 274 to 276 contribute to the NAD(+) site; that span reads VVT.

The protein belongs to the TER reductase family. In terms of assembly, monomer.

The enzyme catalyses a 2,3-saturated acyl-[ACP] + NAD(+) = a (2E)-enoyl-[ACP] + NADH + H(+). It functions in the pathway lipid metabolism; fatty acid biosynthesis. Functionally, involved in the final reduction of the elongation cycle of fatty acid synthesis (FAS II). Catalyzes the reduction of a carbon-carbon double bond in an enoyl moiety that is covalently linked to an acyl carrier protein (ACP). The protein is Enoyl-[acyl-carrier-protein] reductase [NADH] of Xanthomonas axonopodis pv. citri (strain 306).